The chain runs to 613 residues: MQKSLLAIAMASLLTPISYLHAQEVQTNDTVVVTANRFEQVESSVLASISVVTKAEIEQLNVTTALDILKTLPGVEVNSQGGKGQISSIFLRGTSSKHTLVLVDGVKINSATAGGASLGLIPAFAIEQIEVVRGPRAAIYGSDAIGGVIHIKTIPANRQTKHDANLGYGNDDHSSLAWRSSGQLNDSTQASFVFSDEKSDGYRVNEVAPSGDSHGYQSQTLFGSLRHEIDDAWSVQFNGYQLSSDVEYANQFSGVKNESNTDFYSIAGSLNFHKDNYSSQLMVSRSDNESWDGVASGMVAKTALFSSRNSVSWLNHWVVVPALTLAAGVDYDQENARQGGANATNYSKTEKDNKAAYVTAHFSKNIVTAEASIRSDDDSAFGKHNTWNLGLGIAPSDYVEFIASTGTGFKAPTFNDLYWPSSGNPNLKPETSKSSEVGIRSYLPFVQIDISAYRNEIEDMIDWAPTGPGGAWTPSNIDNAKIEGIEIEALFETGVIEHRVSAEWKDPRDKSDDSFLIRRARENFSWVSTYSADRFGFSAVANYVGDRKDSTGKTMDAYTLLDISANYKMTEALTLGARVGNLFDKEYQTAHSSGGKYYVGEGRNWFATVNYRF.

The signal sequence occupies residues 1-22 (MQKSLLAIAMASLLTPISYLHA). Positions 29 to 36 (DTVVVTAN) match the TonB box motif. Positions 41-154 (VESSVLASIS…IGGVIHIKTI (114 aa)) constitute a TBDR plug domain. The TBDR beta-barrel domain maps to 159 to 613 (QTKHDANLGY…NWFATVNYRF (455 aa)). Positions 591–613 (HSSGGKYYVGEGRNWFATVNYRF) match the TonB C-terminal box motif.

The protein belongs to the TonB-dependent receptor family. BtuB (TC 1.B.14.3.1) subfamily.

It localises to the cell outer membrane. In terms of biological role, involved in the active translocation of vitamin B12 (cyanocobalamin) across the outer membrane to the periplasmic space. It derives its energy for transport by interacting with the trans-periplasmic membrane protein TonB. The protein is Vitamin B12 transporter BtuB of Vibrio vulnificus (strain YJ016).